We begin with the raw amino-acid sequence, 145 residues long: D-aminoacyl-tRNA deacylase (145 aa).

Residues 137-138 (GP) carry the Gly-cisPro motif, important for rejection of L-amino acids motif.

The protein belongs to the DTD family. Homodimer.

Its subcellular location is the cytoplasm. The catalysed reaction is glycyl-tRNA(Ala) + H2O = tRNA(Ala) + glycine + H(+). It catalyses the reaction a D-aminoacyl-tRNA + H2O = a tRNA + a D-alpha-amino acid + H(+). Functionally, an aminoacyl-tRNA editing enzyme that deacylates mischarged D-aminoacyl-tRNAs. Also deacylates mischarged glycyl-tRNA(Ala), protecting cells against glycine mischarging by AlaRS. Acts via tRNA-based rather than protein-based catalysis; rejects L-amino acids rather than detecting D-amino acids in the active site. By recycling D-aminoacyl-tRNA to D-amino acids and free tRNA molecules, this enzyme counteracts the toxicity associated with the formation of D-aminoacyl-tRNA entities in vivo and helps enforce protein L-homochirality. This chain is D-aminoacyl-tRNA deacylase, found in Klebsiella pneumoniae subsp. pneumoniae (strain ATCC 700721 / MGH 78578).